The sequence spans 330 residues: MSQLKVDNGPLSHVANSGPISIGAYCFSSIMMTVTNKFVVNLKGFNMNFVMLFVQAAVCVNLLFFLRLLGYAKFRPLNRTDAKNWFPITIFLVLMIYTSSKSLQYLAVPIYTIFKNLTIILIAYGEVLFFGGSVTAMELSSFLLMVLSSVVATLGDQQALKKTADAGASLFNIGYMWMFINCLSSAAFVLVMRKRIKLTNFKDFDTMFYNNILSMPVLLALSFLMEDWSTENLTKNLSRDSVTAMIISGMTAVCISYCSGWCVRVTSSTTYSMVGALNKLPIALSGLIFFDAPKNFLSIFSIFLGFLSGIVYAVAKQKKQQNPQPSAPIK.

Residues 1–13 (MSQLKVDNGPLSH) are Cytoplasmic-facing. The chain crosses the membrane as a helical span at residues 14-34 (VANSGPISIGAYCFSSIMMTV). Topologically, residues 35–48 (TNKFVVNLKGFNMN) are lumenal. Residues 49–69 (FVMLFVQAAVCVNLLFFLRLL) form a helical membrane-spanning segment. Residues 70–81 (GYAKFRPLNRTD) lie on the Cytoplasmic side of the membrane. Residues 82 to 98 (AKNWFPITIFLVLMIYT) form a helical membrane-spanning segment. At 99–104 (SSKSLQ) the chain is on the lumenal side. A helical membrane pass occupies residues 105–124 (YLAVPIYTIFKNLTIILIAY). The Cytoplasmic portion of the chain corresponds to 125–138 (GEVLFFGGSVTAME). A helical transmembrane segment spans residues 139–155 (LSSFLLMVLSSVVATLG). At 156–170 (DQQALKKTADAGASL) the chain is on the lumenal side. A helical membrane pass occupies residues 171 to 191 (FNIGYMWMFINCLSSAAFVLV). The Cytoplasmic segment spans residues 192-203 (MRKRIKLTNFKD). Residues 204 to 224 (FDTMFYNNILSMPVLLALSFL) traverse the membrane as a helical segment. Residues 225–241 (MEDWSTENLTKNLSRDS) are Lumenal-facing. A helical transmembrane segment spans residues 242–262 (VTAMIISGMTAVCISYCSGWC). At 263 to 269 (VRVTSST) the chain is on the cytoplasmic side. Residues 270–290 (TYSMVGALNKLPIALSGLIFF) traverse the membrane as a helical segment. The Lumenal portion of the chain corresponds to 291–294 (DAPK). Residues 295–315 (NFLSIFSIFLGFLSGIVYAVA) traverse the membrane as a helical segment. At 316–330 (KQKKQQNPQPSAPIK) the chain is on the cytoplasmic side.

It belongs to the TPT transporter family. SLC35D subfamily. In terms of assembly, homooligomer.

It localises to the golgi apparatus membrane. The protein localises to the cytoplasmic vesicle membrane. It is found in the endoplasmic reticulum membrane. Its function is as follows. Involved in the import of GDP-mannose from the cytoplasm into the Golgi lumen. This chain is GDP-mannose transporter (VRG4), found in Kluyveromyces lactis (strain ATCC 8585 / CBS 2359 / DSM 70799 / NBRC 1267 / NRRL Y-1140 / WM37) (Yeast).